Consider the following 167-residue polypeptide: Zymogen granule membrane protein 16 (167 aa).

An N-terminal signal peptide occupies residues 1-16; the sequence is MLAIALLVLLCASASA. Residues 24-159 form the Jacalin-type lectin domain; it reads SSYSGEYGGK…IDAISLHWDT (136 aa).

The protein belongs to the jacalin lectin family. Expressed in pancreas, colon, duodenum, and much less in stomach.

The protein resides in the secreted. The protein localises to the extracellular space. Its subcellular location is the extracellular matrix. It is found in the zymogen granule lumen. It localises to the golgi apparatus lumen. May play a role in protein trafficking. May act as a linker molecule between the submembranous matrix on the luminal side of zymogen granule membrane (ZGM) and aggregated secretory proteins during granule formation in the TGN. The chain is Zymogen granule membrane protein 16 (Zg16) from Rattus norvegicus (Rat).